The primary structure comprises 471 residues: UDP-glycosyltransferase CGT (471 aa).

The active-site Proton acceptor is His-24. His-24 provides a ligand contact to an anthocyanidin. The active-site Charge relay is Asp-120. Thr-143 is a UDP-alpha-D-glucose binding site. The UDP stretch occupies residues 280–281 (SR). 7 residues coordinate UDP-alpha-D-glucose: Val-343, Gln-345, His-360, Trp-363, Asn-364, Ser-365, and Glu-368. Gly-383 contributes to the an anthocyanidin binding site. Residues Asp-384 and Gln-385 each contribute to the UDP-alpha-D-glucose site.

This sequence belongs to the UDP-glycosyltransferase family.

The catalysed reaction is a 3'-hydro-2'-hydroxy-beta-oxodihydrochalcone + UDP-alpha-D-glucose = a 3'-(beta-D-glucopyranosyl)-2'-hydroxy-beta-oxodihydrochalcone + UDP + H(+). Functionally, UDP-glucose-dependent glucosyltransferase catalyzing the c-glucosylation of 2-hydroxyflavanones. Acts preferentially on the dibenzoylmethane tautomers formed in equilibrium with 2-hydroxyflavanones. No activity with naringenin or naringenin chalcone. The polypeptide is UDP-glycosyltransferase CGT (Oryza sativa subsp. indica (Rice)).